The sequence spans 363 residues: Fructose-bisphosphate aldolase C-B (363 aa).

Residues arginine 56 and lysine 147 each coordinate substrate. Residue glutamate 188 is the Proton acceptor of the active site. Lysine 230 functions as the Schiff-base intermediate with dihydroxyacetone-P in the catalytic mechanism.

This sequence belongs to the class I fructose-bisphosphate aldolase family. Homotetramer.

It catalyses the reaction beta-D-fructose 1,6-bisphosphate = D-glyceraldehyde 3-phosphate + dihydroxyacetone phosphate. It participates in carbohydrate degradation; glycolysis; D-glyceraldehyde 3-phosphate and glycerone phosphate from D-glucose: step 4/4. This is Fructose-bisphosphate aldolase C-B (aldocb) from Danio rerio (Zebrafish).